Reading from the N-terminus, the 718-residue chain is Methionine--tRNA ligase (718 aa).

The short motif at Pro-27–His-37 is the 'HIGH' region element. Zn(2+) is bound by residues Cys-158, Cys-161, Cys-171, and Cys-174. The 'KMSKS' region motif lies at Lys-348 to Ser-352. Lys-351 is an ATP binding site. The 107-residue stretch at Asp-612–Lys-718 folds into the tRNA-binding domain.

This sequence belongs to the class-I aminoacyl-tRNA synthetase family. MetG type 1 subfamily. Homodimer. Requires Zn(2+) as cofactor.

The protein resides in the cytoplasm. The catalysed reaction is tRNA(Met) + L-methionine + ATP = L-methionyl-tRNA(Met) + AMP + diphosphate. Its function is as follows. Is required not only for elongation of protein synthesis but also for the initiation of all mRNA translation through initiator tRNA(fMet) aminoacylation. The protein is Methionine--tRNA ligase of Burkholderia thailandensis (strain ATCC 700388 / DSM 13276 / CCUG 48851 / CIP 106301 / E264).